A 362-amino-acid chain; its full sequence is UDP-N-acetylglucosamine--N-acetylmuramyl-(pentapeptide) pyrophosphoryl-undecaprenol N-acetylglucosamine transferase (362 aa).

Residues 14-16 (TGG), R170, S199, and Q289 each bind UDP-N-acetyl-alpha-D-glucosamine.

The protein belongs to the glycosyltransferase 28 family. MurG subfamily.

The protein localises to the cell inner membrane. It carries out the reaction di-trans,octa-cis-undecaprenyl diphospho-N-acetyl-alpha-D-muramoyl-L-alanyl-D-glutamyl-meso-2,6-diaminopimeloyl-D-alanyl-D-alanine + UDP-N-acetyl-alpha-D-glucosamine = di-trans,octa-cis-undecaprenyl diphospho-[N-acetyl-alpha-D-glucosaminyl-(1-&gt;4)]-N-acetyl-alpha-D-muramoyl-L-alanyl-D-glutamyl-meso-2,6-diaminopimeloyl-D-alanyl-D-alanine + UDP + H(+). It participates in cell wall biogenesis; peptidoglycan biosynthesis. Cell wall formation. Catalyzes the transfer of a GlcNAc subunit on undecaprenyl-pyrophosphoryl-MurNAc-pentapeptide (lipid intermediate I) to form undecaprenyl-pyrophosphoryl-MurNAc-(pentapeptide)GlcNAc (lipid intermediate II). In Borrelia hermsii (strain HS1 / DAH), this protein is UDP-N-acetylglucosamine--N-acetylmuramyl-(pentapeptide) pyrophosphoryl-undecaprenol N-acetylglucosamine transferase.